A 305-amino-acid chain; its full sequence is Ornithine carbamoyltransferase (305 aa).

Residues 52 to 55 (STRT), glutamine 79, arginine 103, and 130 to 133 (HPLQ) contribute to the carbamoyl phosphate site. Residues asparagine 162, aspartate 224, and 228 to 229 (SM) each bind L-ornithine. Carbamoyl phosphate-binding positions include 264–265 (CL) and arginine 292.

Belongs to the aspartate/ornithine carbamoyltransferase superfamily. OTCase family.

The protein localises to the cytoplasm. It catalyses the reaction carbamoyl phosphate + L-ornithine = L-citrulline + phosphate + H(+). The protein operates within amino-acid biosynthesis; L-arginine biosynthesis; L-arginine from L-ornithine and carbamoyl phosphate: step 1/3. In terms of biological role, reversibly catalyzes the transfer of the carbamoyl group from carbamoyl phosphate (CP) to the N(epsilon) atom of ornithine (ORN) to produce L-citrulline. This is Ornithine carbamoyltransferase from Pyrobaculum aerophilum (strain ATCC 51768 / DSM 7523 / JCM 9630 / CIP 104966 / NBRC 100827 / IM2).